The chain runs to 345 residues: Phosphoribosylformylglycinamidine cyclo-ligase (345 aa).

It belongs to the AIR synthase family.

The protein resides in the cytoplasm. It catalyses the reaction 2-formamido-N(1)-(5-O-phospho-beta-D-ribosyl)acetamidine + ATP = 5-amino-1-(5-phospho-beta-D-ribosyl)imidazole + ADP + phosphate + H(+). It participates in purine metabolism; IMP biosynthesis via de novo pathway; 5-amino-1-(5-phospho-D-ribosyl)imidazole from N(2)-formyl-N(1)-(5-phospho-D-ribosyl)glycinamide: step 2/2. This Shigella dysenteriae serotype 1 (strain Sd197) protein is Phosphoribosylformylglycinamidine cyclo-ligase.